Consider the following 628-residue polypeptide: tRNA uridine 5-carboxymethylaminomethyl modification enzyme MnmG (628 aa).

Residue 13–18 participates in FAD binding; the sequence is GAGHAG. 281–295 contacts NAD(+); the sequence is GARYCPSIEDKIKKF.

The protein belongs to the MnmG family. In terms of assembly, homodimer. Heterotetramer of two MnmE and two MnmG subunits. FAD is required as a cofactor.

The protein localises to the cytoplasm. In terms of biological role, NAD-binding protein involved in the addition of a carboxymethylaminomethyl (cmnm) group at the wobble position (U34) of certain tRNAs, forming tRNA-cmnm(5)s(2)U34. The protein is tRNA uridine 5-carboxymethylaminomethyl modification enzyme MnmG of Treponema denticola (strain ATCC 35405 / DSM 14222 / CIP 103919 / JCM 8153 / KCTC 15104).